Consider the following 313-residue polypeptide: Protoheme IX farnesyltransferase (313 aa).

The next 9 membrane-spanning stretches (helical) occupy residues Phe-22–Met-42, Ile-46–Ala-66, Gly-98–Ala-118, Val-121–Trp-141, Ile-150–Gly-170, Trp-177–Phe-197, Ile-223–Gly-243, Ile-246–Trp-266, and Phe-284–Leu-304.

Belongs to the UbiA prenyltransferase family. Protoheme IX farnesyltransferase subfamily. As to quaternary structure, interacts with CtaA.

It is found in the cell inner membrane. The catalysed reaction is heme b + (2E,6E)-farnesyl diphosphate + H2O = Fe(II)-heme o + diphosphate. It participates in porphyrin-containing compound metabolism; heme O biosynthesis; heme O from protoheme: step 1/1. Functionally, converts heme B (protoheme IX) to heme O by substitution of the vinyl group on carbon 2 of heme B porphyrin ring with a hydroxyethyl farnesyl side group. The chain is Protoheme IX farnesyltransferase from Ruegeria sp. (strain TM1040) (Silicibacter sp.).